Consider the following 743-residue polypeptide: NAD(P)H-quinone oxidoreductase subunit 5, chloroplastic (743 aa).

The next 14 helical transmembrane spans lie at 9–29, 40–60, 89–109, 125–145, 147–167, 184–204, 219–239, 258–278, 280–300, 396–416, 425–445, 548–568, 607–627, and 723–743; these read WIIPFVPLPVPMLIGVGLLLF, WAFHSVLLLSIVMIFSIDLSI, IDPLTSIMLILITTVGIMVLI, FAYMSFFSTSMLGLVTSSNLI, IYIFWELVGMCSYLLIGFWFT, IGDLGLLLGILGFYWITGSFE, NEVNLVFLTICAVLLFAGAVA, TPISALIHAATMVAAGIFLVA, LLPLFIVIPYILNLISFIGII, TAFFLGTLSLCGIPPLACFWS, WLYSPIFAIIACSTAGLTAFY, LLPLLVLVLFTLFVGAIGIPF, IFSVSIAYFGIVIASFLYKPV, and YLFLYLSYVSIFLLIYYFLNL.

It belongs to the complex I subunit 5 family. In terms of assembly, NDH is composed of at least 16 different subunits, 5 of which are encoded in the nucleus.

It is found in the plastid. Its subcellular location is the chloroplast thylakoid membrane. The catalysed reaction is a plastoquinone + NADH + (n+1) H(+)(in) = a plastoquinol + NAD(+) + n H(+)(out). The enzyme catalyses a plastoquinone + NADPH + (n+1) H(+)(in) = a plastoquinol + NADP(+) + n H(+)(out). In terms of biological role, NDH shuttles electrons from NAD(P)H:plastoquinone, via FMN and iron-sulfur (Fe-S) centers, to quinones in the photosynthetic chain and possibly in a chloroplast respiratory chain. The immediate electron acceptor for the enzyme in this species is believed to be plastoquinone. Couples the redox reaction to proton translocation, and thus conserves the redox energy in a proton gradient. The sequence is that of NAD(P)H-quinone oxidoreductase subunit 5, chloroplastic (ndhF) from Carpenteria californica (Tree anemone).